We begin with the raw amino-acid sequence, 340 residues long: CMP-N-acetylneuraminate-beta-galactosamide-alpha-2,3-sialyltransferase 1 (340 aa).

The Cytoplasmic segment spans residues 1–13 (MVTLRKRTLKVLT). A helical; Signal-anchor for type II membrane protein membrane pass occupies residues 14–34 (FLVLFIFLTSFFLNYSHTMVA). Residues 35–340 (TTWFPKQMVL…INKIRIFKGR (306 aa)) are Lumenal-facing. 3 disulfide bridges follow: Cys59-Cys64, Cys61-Cys139, and Cys142-Cys281. N-linked (GlcNAc...) asparagine glycosylation occurs at Asn79. A substrate-binding site is contributed by Gln105. Asn114 carries an N-linked (GlcNAc...) asparagine glycan. Asn147 and Asn170 together coordinate substrate. Asn201 is a glycosylation site (N-linked (GlcNAc...) asparagine). Residues Tyr230, Tyr266, Gly270, Gly290, His299, and His316 each coordinate substrate. The N-linked (GlcNAc...) asparagine glycan is linked to Asn323.

The protein belongs to the glycosyltransferase 29 family. In terms of processing, the soluble form derives from the membrane form by proteolytic processing. As to expression, expressed in several tissues. Highest expression in lung, liver, skeletal muscle, kidney, pancreas, spleen and placenta.

The protein resides in the golgi apparatus. The protein localises to the golgi stack membrane. Its subcellular location is the trans-Golgi network membrane. It localises to the secreted. The enzyme catalyses a beta-D-galactosyl-(1-&gt;3)-N-acetyl-alpha-D-galactosaminyl derivative + CMP-N-acetyl-beta-neuraminate = an N-acetyl-alpha-neuraminyl-(2-&gt;3)-beta-D-galactosyl-(1-&gt;3)-N-acetyl-alpha-D-galactosaminyl derivative + CMP + H(+). The catalysed reaction is a ganglioside GM1 + CMP-N-acetyl-beta-neuraminate = a ganglioside GD1a + CMP + H(+). It catalyses the reaction a ganglioside GM1 (d18:1(4E)) + CMP-N-acetyl-beta-neuraminate = a ganglioside GD1a (d18:1(4E)) + CMP + H(+). It carries out the reaction ganglioside GM1 (d18:1(4E)/18:0) + CMP-N-acetyl-beta-neuraminate = ganglioside GD1a (18:1(4E)/18:0) + CMP + H(+). The enzyme catalyses a ganglioside GA1 + CMP-N-acetyl-beta-neuraminate = a ganglioside GM1b + CMP + H(+). The catalysed reaction is a ganglioside GA1 (d18:1(4E)) + CMP-N-acetyl-beta-neuraminate = a ganglioside GM1b (d18:1(4E)) + CMP + H(+). It catalyses the reaction a ganglioside GD1b + CMP-N-acetyl-beta-neuraminate = a ganglioside GT1b + CMP + H(+). It carries out the reaction a 3-O-[beta-D-galactosyl-(1-&gt;3)-N-acetyl-alpha-D-galactosaminyl]-L-threonyl-[protein] + CMP-N-acetyl-beta-neuraminate = a 3-O-[N-acetyl-alpha-neuraminyl-(2-&gt;3)-beta-D-galactosyl-(1-&gt;3)-N-acetyl-alpha-D-galactosaminyl]-L-threonyl-[protein] + CMP + H(+). The enzyme catalyses a 3-O-[beta-D-galactosyl-(1-&gt;3)-N-acetyl-alpha-D-galactosaminyl]-L-seryl-[protein] + CMP-N-acetyl-beta-neuraminate = 3-O-[N-acetyl-alpha-neuraminyl-(2-&gt;3)-beta-D-galactosyl-(1-&gt;3)-N-acetyl-alpha-D-galactosaminyl]-L-seryl-[protein] + CMP + H(+). The protein operates within protein modification; protein glycosylation. Its pathway is glycolipid biosynthesis. In terms of biological role, a beta-galactoside alpha2-&gt;3 sialyltransferase involved in terminal sialylation of glycoproteins and glycolipids. Catalyzes the transfer of sialic acid (N-acetyl-neuraminic acid; Neu5Ac) from the nucleotide sugar donor CMP-Neu5Ac onto acceptor Galbeta-(1-&gt;3)-GalNAc-terminated glycoconjugates through an alpha2-3 linkage. Adds sialic acid to the core 1 O-glycan, Galbeta-(1-&gt;3)-GalNAc-O-Ser/Thr, which is a major structure of mucin-type O-glycans. As part of a homeostatic mechanism that regulates CD8-positive T cell numbers, sialylates core 1 O-glycans of T cell glycoproteins, SPN/CD43 and PTPRC/CD45. Prevents premature apoptosis of thymic CD8-positive T cells prior to peripheral emigration, whereas in the secondary lymphoid organs controls the survival of CD8-positive memory T cells generated following a successful immune response. Transfers sialic acid to asialofetuin, presumably onto Galbeta-(1-&gt;3)-GalNAc-O-Ser. Sialylates GM1a, GA1 and GD1b gangliosides to form GD1a, GM1b and GT1b, respectively. The polypeptide is CMP-N-acetylneuraminate-beta-galactosamide-alpha-2,3-sialyltransferase 1 (Homo sapiens (Human)).